Here is a 655-residue protein sequence, read N- to C-terminus: Protein npp-24 (655 aa).

Residues 263–283 form a helical membrane-spanning segment; it reads ICSVFVLVSGGGVLSHLVVFP.

Its subcellular location is the membrane. This Caenorhabditis elegans protein is Protein npp-24.